The chain runs to 355 residues: Chemerin-like receptor 2 (355 aa).

Topologically, residues 1–41 (MEDLEETLFEEFENYSYDLDYYSLESDLEEKVQLGVVHWVS) are extracellular. Residue asparagine 14 is glycosylated (N-linked (GlcNAc...) asparagine). Residues 42 to 62 (LVLYCLAFVLGIPGNAIVIWF) form a helical membrane-spanning segment. At 63-73 (TGFKWKKTVTT) the chain is on the cytoplasmic side. Residues 74 to 94 (LWFLNLAIADFIFLLFLPLYI) form a helical membrane-spanning segment. Over 95–112 (SYVAMNFHWPFGIWLCKA) the chain is Extracellular. Cysteine 110 and cysteine 187 are disulfide-bonded. Residues 113 to 133 (NSFTAQLNMFASVFFLTVISL) form a helical membrane-spanning segment. Over 134–154 (DHYIHLIHPVLSHRHRTLKNS) the chain is Cytoplasmic. Residues 155 to 175 (LIVIIFIWLLASLIGGPALYF) form a helical membrane-spanning segment. At 176–210 (RDTVEFNNHTLCYNNFQKHDPDLTLIRHHVLTWVK) the chain is on the extracellular side. The helical transmembrane segment at 211–231 (FIIGYLFPLLTMSICYLCLIF) threads the bilayer. At 232 to 247 (KVKKRSILISSRHFWT) the chain is on the cytoplasmic side. The chain crosses the membrane as a helical span at residues 248–268 (ILVVVVAFVVCWTPYHLFSIW). Topologically, residues 269 to 286 (ELTIHHNSYSHHVMQAGI) are extracellular. The chain crosses the membrane as a helical span at residues 287-307 (PLSTGLAFLNSCLNPILYVLI). Over 308–355 (SKKFQARFRSSVAEILKYTLWEVSCSGTVSEQLRNSETKNLCLLETAQ) the chain is Cytoplasmic.

Belongs to the chemokine-like receptor (CMKLR) family. Expressed in hippocampus.

It localises to the cell membrane. Its function is as follows. Receptor for chemoattractant adipokine chemerin/RARRES2 suggesting a role for this receptor in the regulation of inflammation and energy homesotasis. Signals mainly via beta-arrestin pathway. Binding of RARRES2 activates weakly G proteins, calcium mobilization and MAPK1/MAPK3 (ERK1/2) phosphorylation too. Also acts as a receptor for TAFA1, mediates its effects on neuronal stem-cell proliferation and differentiation via the activation of ROCK/ERK and ROCK/STAT3 signaling pathway. In terms of biological role, (Microbial infection) Coreceptor for HIV-1. This Homo sapiens (Human) protein is Chemerin-like receptor 2.